The primary structure comprises 318 residues: Transcriptional regulator NovG (318 aa).

The segment covering V146 to G156 has biased composition (polar residues). A disordered region spans residues V146–G176. Over residues T162–G176 the composition is skewed to basic and acidic residues.

The protein belongs to the ParB family.

Its function is as follows. Transcription regulator that specifically activates expression of genes involved in the novobiocin biosynthesis pathway. Binds 5'-GTTCRACTG(N)(11)CRGTYGAAC-3' DNA sequence. In Streptomyces niveus (Streptomyces spheroides), this protein is Transcriptional regulator NovG (novG).